The sequence spans 179 residues: Large ribosomal subunit protein uL5 (179 aa).

It belongs to the universal ribosomal protein uL5 family. In terms of assembly, part of the 50S ribosomal subunit; part of the 5S rRNA/L5/L18/L25 subcomplex. Contacts the 5S rRNA and the P site tRNA. Forms a bridge to the 30S subunit in the 70S ribosome.

Functionally, this is one of the proteins that bind and probably mediate the attachment of the 5S RNA into the large ribosomal subunit, where it forms part of the central protuberance. In the 70S ribosome it contacts protein S13 of the 30S subunit (bridge B1b), connecting the 2 subunits; this bridge is implicated in subunit movement. Contacts the P site tRNA; the 5S rRNA and some of its associated proteins might help stabilize positioning of ribosome-bound tRNAs. The polypeptide is Large ribosomal subunit protein uL5 (Desulforapulum autotrophicum (strain ATCC 43914 / DSM 3382 / VKM B-1955 / HRM2) (Desulfobacterium autotrophicum)).